Consider the following 105-residue polypeptide: Small ribosomal subunit protein uS10c (105 aa).

This sequence belongs to the universal ribosomal protein uS10 family. Part of the 30S ribosomal subunit.

The protein resides in the plastid. It localises to the chloroplast. Involved in the binding of tRNA to the ribosomes. This is Small ribosomal subunit protein uS10c from Gracilaria tenuistipitata var. liui (Red alga).